The chain runs to 461 residues: Argininosuccinate lyase (461 aa).

This sequence belongs to the lyase 1 family. Argininosuccinate lyase subfamily.

The protein localises to the cytoplasm. The enzyme catalyses 2-(N(omega)-L-arginino)succinate = fumarate + L-arginine. The protein operates within amino-acid biosynthesis; L-arginine biosynthesis; L-arginine from L-ornithine and carbamoyl phosphate: step 3/3. The polypeptide is Argininosuccinate lyase (Bacillus subtilis (strain 168)).